Consider the following 107-residue polypeptide: Phosphoribosyl-ATP pyrophosphatase (107 aa).

The protein belongs to the PRA-PH family.

It localises to the cytoplasm. The enzyme catalyses 1-(5-phospho-beta-D-ribosyl)-ATP + H2O = 1-(5-phospho-beta-D-ribosyl)-5'-AMP + diphosphate + H(+). The protein operates within amino-acid biosynthesis; L-histidine biosynthesis; L-histidine from 5-phospho-alpha-D-ribose 1-diphosphate: step 2/9. This Bacillus cereus (strain G9842) protein is Phosphoribosyl-ATP pyrophosphatase.